We begin with the raw amino-acid sequence, 189 residues long: Ras-like protein 1 (189 aa).

10 to 17 (GGGGVGKS) is a GTP binding site. The Effector region motif lies at 32–40 (YDPTIEDSY). GTP-binding positions include 57–61 (DTAGQ) and 116–119 (NKCD). At Cys-186 the chain carries Cysteine methyl ester. Cys-186 carries S-geranylgeranyl cysteine lipidation. The propeptide at 187–189 (LLL) is removed in mature form.

The protein belongs to the small GTPase superfamily. Ras family.

The protein localises to the cell membrane. It carries out the reaction GTP + H2O = GDP + phosphate + H(+). Its function is as follows. Ras proteins bind GDP/GTP and possess intrinsic GTPase activity. This chain is Ras-like protein 1 (RAS1), found in Physarum polycephalum (Slime mold).